Consider the following 613-residue polypeptide: Acetylcholinesterase (613 aa).

A signal peptide spans 1-30; sequence MRPPWCPLHTPSLTPPLLLLLFLIGGGAEA. N-linked (GlcNAc...) asparagine glycosylation occurs at asparagine 91. A disulfide bridge links cysteine 99 with cysteine 126. Catalysis depends on serine 233, which acts as the Acyl-ester intermediate. Cysteine 287 and cysteine 302 form a disulfide bridge. Residue asparagine 295 is glycosylated (N-linked (GlcNAc...) asparagine). The Charge relay system role is filled by glutamate 364. Asparagine 380 is a glycosylation site (N-linked (GlcNAc...) asparagine). Cysteines 439 and 559 form a disulfide. Histidine 477 functions as the Charge relay system in the catalytic mechanism. N-linked (GlcNAc...) asparagine glycosylation occurs at asparagine 494.

It belongs to the type-B carboxylesterase/lipase family. In terms of assembly, interacts with PRIMA1. The interaction with PRIMA1 is required to anchor it to the basal lamina of cells and organize into tetramers. Isoform H generates GPI-anchored dimers; disulfide linked. Isoform T generates multiple structures, ranging from monomers and dimers to collagen-tailed and hydrophobic-tailed forms, in which catalytic tetramers are associated with anchoring proteins that attach them to the basal lamina or to cell membranes. In the collagen-tailed forms, isoform T subunits are associated with a specific collagen, COLQ, which triggers the formation of isoform T tetramers, from monomers and dimers.

The protein resides in the synapse. The protein localises to the secreted. Its subcellular location is the cell membrane. It carries out the reaction acetylcholine + H2O = choline + acetate + H(+). Functionally, terminates signal transduction at the neuromuscular junction by rapid hydrolysis of the acetylcholine released into the synaptic cleft. The protein is Acetylcholinesterase (ACHE) of Bos taurus (Bovine).